A 390-amino-acid polypeptide reads, in one-letter code: 5-hydroxytryptamine receptor 1B (390 aa).

Residues 1–21 (MEETGAQCAPPPPAGSQTGVS) form a disordered region. Over 1–46 (MEETGAQCAPPPPAGSQTGVSQVNLSAAPSHNCSTEGYVYQDSVAL) the chain is Extracellular. Residues Asn-24 and Asn-32 are each glycosylated (N-linked (GlcNAc...) asparagine). A helical transmembrane segment spans residues 47–72 (PWKVLLVVLLALITLATTLSNAFVIA). The Cytoplasmic segment spans residues 73–86 (TVYRTRKLHTPANY). The chain crosses the membrane as a helical span at residues 87–111 (LIASLAVTDLLVSILVMPISTMYVV). The Extracellular portion of the chain corresponds to 112-119 (TGRWTLGQ). The chain crosses the membrane as a helical span at residues 120–145 (VVCDFWLSSDITCCTASILHLCVIAL). A disulfide bridge links Cys-122 with Cys-199. Ergotamine contacts are provided by Asp-129 and Thr-134. A DRY motif; important for ligand-induced conformation changes and signaling motif is present at residues 146-148 (DRY). The Cytoplasmic portion of the chain corresponds to 146–165 (DRYWAITDAVEYSAKRTPKR). Residues 166–184 (AAVMIALVWVFSISISLPP) form a helical membrane-spanning segment. Residues 185–205 (FFWRQAKAEEEVLDCLVNTDH) lie on the Extracellular side of the membrane. Val-201 contributes to the ergotamine binding site. A helical membrane pass occupies residues 206–229 (ILYTVYSTVGAFYFPTLLLIALYS). Residues 230–315 (RIYVEARSRI…AARERKATKT (86 aa)) are Cytoplasmic-facing. Residues 251–282 (LTRAQLMTDSPGSTSSVTSINSRAPDVPSESG) are disordered. Residues 255–272 (QLMTDSPGSTSSVTSINS) are compositionally biased toward polar residues. The helical transmembrane segment at 316–337 (LGIILGAFIVCWLPFFIISLVM) threads the bilayer. Residues 338-347 (PICKDACWFH) are Extracellular-facing. The helical transmembrane segment at 348-370 (LAIFDFFTWLGYLNSLINPIIYT) threads the bilayer. The NPxxY motif; important for ligand-induced conformation changes and signaling motif lies at 365–369 (NPIIY). Residues 371 to 390 (MSNEDFKQAFHKLIRFKCAS) are Cytoplasmic-facing. Cys-388 carries S-palmitoyl cysteine lipidation.

Belongs to the G-protein coupled receptor 1 family. As to quaternary structure, homodimer. Heterodimer with HTR1D. In terms of processing, phosphorylated. Desensitization of the receptor may be mediated by its phosphorylation. Palmitoylated.

It localises to the cell membrane. G-protein coupled receptor for 5-hydroxytryptamine (serotonin). Also functions as a receptor for ergot alkaloid derivatives, various anxiolytic and antidepressant drugs and other psychoactive substances, such as lysergic acid diethylamide (LSD). Ligand binding causes a conformation change that triggers signaling via guanine nucleotide-binding proteins (G proteins) and modulates the activity of downstream effectors, such as adenylate cyclase. HTR1B is coupled to G(i)/G(o) G alpha proteins and mediates inhibitory neurotransmission by inhibiting adenylate cyclase activity. Arrestin family members inhibit signaling via G proteins and mediate activation of alternative signaling pathways. Regulates the release of 5-hydroxytryptamine, dopamine and acetylcholine in the brain, and thereby affects neural activity, nociceptive processing, pain perception, mood and behavior. Besides, plays a role in vasoconstriction of cerebral arteries. The polypeptide is 5-hydroxytryptamine receptor 1B (HTR1B) (Equus caballus (Horse)).